Here is a 245-residue protein sequence, read N- to C-terminus: 2,3-bisphosphoglycerate-dependent phosphoglycerate mutase 1 (245 aa).

Residues 8-15 (RHGQSLWN), 21-22 (TG), R60, 87-90 (ERHY), K98, 114-115 (RR), and 183-184 (GN) each bind substrate. The active-site Tele-phosphohistidine intermediate is H9. Residue E87 is the Proton donor/acceptor of the active site.

The protein belongs to the phosphoglycerate mutase family. BPG-dependent PGAM subfamily.

It carries out the reaction (2R)-2-phosphoglycerate = (2R)-3-phosphoglycerate. Its pathway is carbohydrate degradation; glycolysis; pyruvate from D-glyceraldehyde 3-phosphate: step 3/5. Catalyzes the interconversion of 2-phosphoglycerate and 3-phosphoglycerate. The sequence is that of 2,3-bisphosphoglycerate-dependent phosphoglycerate mutase 1 from Bacillus cereus (strain ATCC 10987 / NRS 248).